We begin with the raw amino-acid sequence, 93 residues long: UPF0473 protein CHY_0543 (93 aa).

The protein belongs to the UPF0473 family.

The protein is UPF0473 protein CHY_0543 of Carboxydothermus hydrogenoformans (strain ATCC BAA-161 / DSM 6008 / Z-2901).